The primary structure comprises 222 residues: Superoxide dismutase [Mn], mitochondrial (222 aa).

Residues 1-24 (MLSRAACSTSRRLVPALSVLGSRQ) constitute a mitochondrion transit peptide. Histidine 50 lines the Mn(2+) pocket. Tyrosine 58 bears the 3'-nitrotyrosine mark. Residues lysine 68 and lysine 75 each carry the N6-acetyllysine; alternate modification. N6-succinyllysine; alternate is present on residues lysine 68 and lysine 75. Histidine 98 serves as a coordination point for Mn(2+). N6-acetyllysine; alternate occurs at positions 122 and 130. Residues lysine 122 and lysine 130 each carry the N6-succinyllysine; alternate modification. Residues aspartate 183 and histidine 187 each coordinate Mn(2+). N6-acetyllysine is present on lysine 202.

Belongs to the iron/manganese superoxide dismutase family. In terms of assembly, homotetramer. Mn(2+) serves as cofactor. Nitrated under oxidative stress. Nitration coupled with oxidation inhibits the catalytic activity. Post-translationally, acetylation at Lys-122 decreases enzymatic activity. Deacetylated by SIRT3 upon exposure to ionizing radiations or after long fasting. In terms of processing, polyubiquitinated; leading to proteasomal degradation. Deubiquitinated by USP36 which increases protein stability.

The protein resides in the mitochondrion matrix. It carries out the reaction 2 superoxide + 2 H(+) = H2O2 + O2. Its function is as follows. Destroys superoxide anion radicals which are normally produced within the cells and which are toxic to biological systems. This Bos taurus (Bovine) protein is Superoxide dismutase [Mn], mitochondrial (SOD2).